Here is a 311-residue protein sequence, read N- to C-terminus: Olfactory receptor 287 (311 aa).

Residues 1 to 27 (MAWSTGQNLSTPGPFILLGFPGPRSMR) are Extracellular-facing. An N-linked (GlcNAc...) asparagine glycan is attached at Asn-8. A helical membrane pass occupies residues 28–53 (IGLFLLFLVMYLLTVVGNLAIISLVG). The Cytoplasmic portion of the chain corresponds to 54 to 60 (AHRCLQT). The helical transmembrane segment at 61–82 (PMYFFLCNLSFLEIWFTTACVP) threads the bilayer. Residues 83–103 (KTLATFAPRGGVISLAGCATQ) lie on the Extracellular side of the membrane. Cys-100 and Cys-192 form a disulfide bridge. The helical transmembrane segment at 104-123 (MYFVFSLGCTEYFLLAVMAY) threads the bilayer. Residues 124–142 (DRYLAICLPLRYGGIMTPG) are Cytoplasmic-facing. A helical transmembrane segment spans residues 143–161 (LAMRLALGSWLCGFSAITV). Residues 162-199 (PATLIARLSFCGSRVINHFFCDISPWIVLSCTDTQVVE) lie on the Extracellular side of the membrane. Residues 200-222 (LVSFGIAFCVILGSCGITLVSYA) form a helical membrane-spanning segment. Residues 223-239 (YIITTIIKIPSARGRHR) lie on the Cytoplasmic side of the membrane. The helical transmembrane segment at 240-263 (AFSTCSSHLTVVLIWYGSTIFLHV) threads the bilayer. Over 264-275 (RTSVESSLDLTK) the chain is Extracellular. A helical transmembrane segment spans residues 276–295 (AITVLNTIVTPVLNPFIYTL). Topologically, residues 296 to 311 (RNKDVKEALRRTVKGK) are cytoplasmic.

This sequence belongs to the G-protein coupled receptor 1 family. In terms of tissue distribution, olfactory epithelium.

The protein localises to the cell membrane. Odorant receptor. The protein is Olfactory receptor 287 (Olr287) of Rattus norvegicus (Rat).